The chain runs to 166 residues: Succinate dehydrogenase [ubiquinone] cytochrome b small subunit, mitochondrial (166 aa).

Over Met-1–Ser-65 the chain is Mitochondrial matrix. Residues Tyr-66–Ala-87 form a helical membrane-spanning segment. The Mitochondrial intermembrane segment spans residues Ala-88–Thr-94. Residues Met-95 to Ile-115 traverse the membrane as a helical segment. His-106 is a heme binding site. Residues Val-116–Val-124 lie on the Mitochondrial matrix side of the membrane. A ubiquinone is bound at residue Tyr-118. Residues Pro-125–Phe-149 traverse the membrane as a helical segment. The Mitochondrial intermembrane portion of the chain corresponds to Glu-150–Ala-166.

The protein belongs to the CybS family. As to quaternary structure, forms part of complex II containing four subunits: a flavoprotein (FP), an iron-sulfur protein (IP) and a cytochrome b composed of a large and a small subunit.

It is found in the mitochondrion inner membrane. Its pathway is carbohydrate metabolism; tricarboxylic acid cycle. Membrane-anchoring subunit of succinate dehydrogenase (SDH) that is involved in complex II of the mitochondrial electron transport chain and is responsible for transferring electrons from succinate to ubiquinone (coenzyme Q). The polypeptide is Succinate dehydrogenase [ubiquinone] cytochrome b small subunit, mitochondrial (Neurospora crassa (strain ATCC 24698 / 74-OR23-1A / CBS 708.71 / DSM 1257 / FGSC 987)).